The following is a 232-amino-acid chain: Ubiquinone biosynthesis O-methyltransferase (232 aa).

S-adenosyl-L-methionine is bound by residues arginine 36, glycine 55, aspartate 76, and methionine 120.

Belongs to the methyltransferase superfamily. UbiG/COQ3 family.

The enzyme catalyses a 3-demethylubiquinol + S-adenosyl-L-methionine = a ubiquinol + S-adenosyl-L-homocysteine + H(+). It catalyses the reaction a 3-(all-trans-polyprenyl)benzene-1,2-diol + S-adenosyl-L-methionine = a 2-methoxy-6-(all-trans-polyprenyl)phenol + S-adenosyl-L-homocysteine + H(+). The protein operates within cofactor biosynthesis; ubiquinone biosynthesis. Its function is as follows. O-methyltransferase that catalyzes the 2 O-methylation steps in the ubiquinone biosynthetic pathway. In Burkholderia ambifaria (strain MC40-6), this protein is Ubiquinone biosynthesis O-methyltransferase.